The chain runs to 91 residues: DNA-binding protein HRL53 (91 aa).

Residues 57–91 form a disordered region; that stretch reads ATKGRNPSTGAEVDIPARNVPKFTPGKGLKDAVNG.

This sequence belongs to the bacterial histone-like protein family.

Functionally, histone-like DNA-binding protein which is capable of wrapping DNA to stabilize it, and thus to prevent its denaturation under extreme environmental conditions. Binds to nod promoters and induces DNA binding. The protein is DNA-binding protein HRL53 of Rhizobium leguminosarum.